Reading from the N-terminus, the 260-residue chain is Creatinine amidohydrolase (260 aa).

Glutamate 34 contributes to the Mn(2+) binding site. Zn(2+) is bound by residues glutamate 34, histidine 36, and aspartate 45. Aspartate 45 serves as a coordination point for Mn(2+). Serine 78 is a creatine binding site. Residue histidine 120 participates in Mn(2+) binding. Histidine 120 lines the Zn(2+) pocket. 4 residues coordinate creatine: tyrosine 121, tryptophan 174, aspartate 175, and histidine 178. Glutamate 183 contacts Zn(2+).

This sequence belongs to the creatininase superfamily. As to quaternary structure, homohexamer; trimer of dimers. Zn(2+) serves as cofactor. Mn(2+) is required as a cofactor.

It catalyses the reaction creatinine + H2O = creatine. It functions in the pathway amine and polyamine degradation; creatinine degradation. Its activity is regulated as follows. Is markedly inactivated in vitro by heavy metal ions, N-bromosuccinimide, ethoxyformic anhydride, and dye-sensitized photooxidation. Functionally, cyclic amidohydrolase that catalyzes the reversible conversion of creatinine to creatine. Is also active toward glycocyamidine, though the reaction rate is very low, but it is completely inert toward hydantoin and its derivatives. This chain is Creatinine amidohydrolase (crnA), found in Pseudomonas putida (Arthrobacter siderocapsulatus).